A 793-amino-acid polypeptide reads, in one-letter code: Ferredoxin/F(420)H(2)-dependent CoB-CoM heterodisulfide reductase subunit A (793 aa).

An FAD-binding site is contributed by 147–170 (GGGVAGIEAALNLAEAGFPVTMVE). 4Fe-4S ferredoxin-type domains lie at 233–264 (RKPRFVLEDKCKGCVDLCSGVCPVEIENPMNY), 282–311 (QVVLIDPDHCVGCGLCQLACPAEAVDYEQK), 571–600 (MGAHVDPDKCIGCRTCVEVCKFGKISIENK), and 601–629 (KAVVDEVSCYGCGDCSAACPVGAIQMRNF). Residues cysteine 243, cysteine 246, cysteine 250, cysteine 254, cysteine 291, cysteine 294, cysteine 297, cysteine 301, cysteine 580, cysteine 583, cysteine 586, cysteine 590, cysteine 609, cysteine 612, cysteine 615, and cysteine 619 each contribute to the [4Fe-4S] cluster site.

Belongs to the HdrA family. As to quaternary structure, the ferredoxin/F(420)H(2)-dependent CoB-CoM heterodisulfide reductase is composed of three subunits; HdrA2, HdrB2 and HdrC2. It depends on [4Fe-4S] cluster as a cofactor. Requires [2Fe-2S] cluster as cofactor. FAD serves as cofactor.

The protein localises to the cytoplasm. It carries out the reaction coenzyme B + coenzyme M + 2 oxidized [2Fe-2S]-[ferredoxin] = coenzyme M-coenzyme B heterodisulfide + 2 reduced [2Fe-2S]-[ferredoxin] + 2 H(+). The enzyme catalyses coenzyme B + 2 oxidized coenzyme F420-(gamma-L-Glu)(n) + coenzyme M + 2 reduced [2Fe-2S]-[ferredoxin] + 4 H(+) = coenzyme M-coenzyme B heterodisulfide + 2 reduced coenzyme F420-(gamma-L-Glu)(n) + 2 oxidized [2Fe-2S]-[ferredoxin]. The protein operates within cofactor metabolism; coenzyme M-coenzyme B heterodisulfide reduction; coenzyme B and coenzyme M from coenzyme M-coenzyme B heterodisulfide: step 1/1. Functionally, part of a complex that catalyzes the reversible reduction of CoM-S-S-CoB to the thiol-coenzymes H-S-CoM (coenzyme M) and H-S-CoB (coenzyme B). Catalyzes the transfer of electrons from ferredoxin to CoM-S-S-CoB during methanogenesis from acetate. Electrons transfer from ferredoxin to CoM-S-S-CoB via HdrA2, HdrC2 and HdrB2. In addition, the complex can use electron bifurcation to direct electron pairs from reduced coenzyme F420 towards the reduction of both ferredoxin and CoB-CoM heterodisulfide. This activity may take place during Fe(III)-dependent anaerobic methane oxidation. In Methanosarcina acetivorans (strain ATCC 35395 / DSM 2834 / JCM 12185 / C2A), this protein is Ferredoxin/F(420)H(2)-dependent CoB-CoM heterodisulfide reductase subunit A.